The sequence spans 507 residues: Lysine--tRNA ligase (507 aa).

The short motif at 26-34 (PSGPIHVGN) is the 'HIGH' region element. The 'KMSKS' region motif lies at 270–274 (AMHSS).

This sequence belongs to the class-I aminoacyl-tRNA synthetase family.

It is found in the cytoplasm. The catalysed reaction is tRNA(Lys) + L-lysine + ATP = L-lysyl-tRNA(Lys) + AMP + diphosphate. The chain is Lysine--tRNA ligase (lysS) from Thermoplasma acidophilum (strain ATCC 25905 / DSM 1728 / JCM 9062 / NBRC 15155 / AMRC-C165).